A 97-amino-acid chain; its full sequence is uncharacterized protein (97 aa).

Its function is as follows. May have a regulatory function. This is an uncharacterized protein from Synechocystis sp. (strain ATCC 27184 / PCC 6803 / Kazusa).